A 309-amino-acid polypeptide reads, in one-letter code: Ornithine carbamoyltransferase (309 aa).

Carbamoyl phosphate-binding positions include Ser56–Thr59, Gln83, Arg107, and His134–Gln137. L-ornithine contacts are provided by residues Asn165, Asp223, and Ser227–Met228. Carbamoyl phosphate-binding positions include Cys263–Leu264 and Arg291.

It belongs to the aspartate/ornithine carbamoyltransferase superfamily. OTCase family.

It is found in the cytoplasm. The enzyme catalyses carbamoyl phosphate + L-ornithine = L-citrulline + phosphate + H(+). Its pathway is amino-acid biosynthesis; L-arginine biosynthesis; L-arginine from L-ornithine and carbamoyl phosphate: step 1/3. Functionally, reversibly catalyzes the transfer of the carbamoyl group from carbamoyl phosphate (CP) to the N(epsilon) atom of ornithine (ORN) to produce L-citrulline. The protein is Ornithine carbamoyltransferase of Burkholderia mallei (strain ATCC 23344).